We begin with the raw amino-acid sequence, 384 residues long: Odorant receptor 33c (384 aa).

At 1–35 (MVIIDSLSFYRPFWICMRLLVPTFFKDSSRPVQLY) the chain is on the cytoplasmic side. Residues 36–56 (VVLLHILVTLWFPLHLLLHLL) form a helical membrane-spanning segment. The Extracellular portion of the chain corresponds to 57–63 (LLPSTAE). The helical transmembrane segment at 64-84 (FFKNLTMSLTCVACSLKHVAH) threads the bilayer. At 85 to 128 (LYHLPQIVEIESLIEQLDTFIASEQEHRYYRDHVHCHARRFTRC) the chain is on the cytoplasmic side. A helical membrane pass occupies residues 129-149 (LYISFGMIYALFLFGVFVQVI). Topologically, residues 150–169 (SGNWELLYPAYFPFDLESNR) are extracellular. A helical membrane pass occupies residues 170-190 (FLGAVALGYQVFSMLVEGFQG). Over 191 to 251 (LGNDTYTPLT…LVRFHNLVSR (61 aa)) the chain is Cytoplasmic. A helical membrane pass occupies residues 252–272 (TISEVQLVQLGGCGATLCIIV). Over 273–274 (SY) the chain is Extracellular. Residues 275-295 (MLFFVGDTISLVYYLVFFGVV) traverse the membrane as a helical segment. Topologically, residues 296 to 358 (CVQLFPSCYF…WIIKAGGLIE (63 aa)) are cytoplasmic. A helical membrane pass occupies residues 359-379 (LNLNAFFATLKMAYSLFAVVV). The Extracellular segment spans residues 380 to 384 (RAKGI).

The protein belongs to the insect chemoreceptor superfamily. Heteromeric odorant receptor channel (TC 1.A.69) family. Or2a subfamily. Interacts with Orco. Complexes exist early in the endomembrane system in olfactory sensory neurons (OSNs), coupling these complexes to the conserved ciliary trafficking pathway. In terms of tissue distribution, expressed in the antenna and in a subset of 18 olfactory receptor neurons in the maxillary palp.

It is found in the cell membrane. In terms of biological role, odorant receptor which mediates acceptance or avoidance behavior, depending on its substrates. The odorant receptor repertoire encodes a large collection of odor stimuli that vary widely in identity, intensity, and duration. May form a complex with Orco to form odorant-sensing units, providing sensitive and prolonged odorant signaling and calcium permeability. The protein is Odorant receptor 33c (Or33c) of Drosophila melanogaster (Fruit fly).